The chain runs to 348 residues: Dihydroorotase (348 aa).

Zn(2+) contacts are provided by histidine 17 and histidine 19. Residues 19-21 and asparagine 45 each bind substrate; that span reads HLR. Residues lysine 103, histidine 140, and histidine 178 each contribute to the Zn(2+) site. Position 103 is an N6-carboxylysine (lysine 103). Histidine 140 is a substrate binding site. Leucine 223 is a binding site for substrate. Aspartate 251 provides a ligand contact to Zn(2+). Aspartate 251 is a catalytic residue. Residues histidine 255 and alanine 267 each coordinate substrate.

It belongs to the metallo-dependent hydrolases superfamily. DHOase family. Class II DHOase subfamily. As to quaternary structure, homodimer. Requires Zn(2+) as cofactor.

The catalysed reaction is (S)-dihydroorotate + H2O = N-carbamoyl-L-aspartate + H(+). Its pathway is pyrimidine metabolism; UMP biosynthesis via de novo pathway; (S)-dihydroorotate from bicarbonate: step 3/3. Its function is as follows. Catalyzes the reversible cyclization of carbamoyl aspartate to dihydroorotate. The sequence is that of Dihydroorotase from Salmonella dublin (strain CT_02021853).